Reading from the N-terminus, the 846-residue chain is Auxin response factor 2A (846 aa).

Residues 1–12 (MAASEVSIQGYS) are compositionally biased toward polar residues. The disordered stretch occupies residues 1–30 (MAASEVSIQGYSEPSDGSRPVSETGRSSSG). The segment at residues 146–248 (FCKTLTASDT…ELRVGVRRAM (103 aa)) is a DNA-binding region (TF-B3). 2 disordered regions span residues 380–423 (PPAL…HSQA) and 660–693 (DMNIGIHPHQSLATDSDQRSEQSKGSKVDDGVAA). 2 stretches are compositionally biased toward polar residues: residues 398 to 408 (ILPTSPDSSVL) and 414 to 423 (SRATADHSQA). Residues 675–693 (SDQRSEQSKGSKVDDGVAA) show a composition bias toward basic and acidic residues. Positions 720–804 (RSCTKVHKQG…RKIFIYTKEE (85 aa)) constitute a PB1 domain. Composition is skewed to polar residues over residues 809-824 (NPGTLNSKGEDTSSVA) and 836-846 (QLPSESGQAES). Residues 809 to 846 (NPGTLNSKGEDTSSVAEGSDAKEVKNLQLPSESGQAES) are disordered.

It belongs to the ARF family. Homodimers and heterodimers. Interacts with ASR1. Expressed in root, leaf and flower. Expressed in flower buds about three days before opening including ovary, petal and sepal with the highest in stamen. Expressed in stem. Expressed in fruit. Expressed in seeds.

It localises to the nucleus. Its function is as follows. Auxin response factors (ARFs) are transcriptional factors that bind specifically to the DNA sequence 5'-TGTCTC-3' found in the auxin-responsive promoter elements (AuxREs). Could act as transcriptional activator or repressor. Involved in the control of fruit ripening process. Regulates expression of a number of ripening regulators, transcription factors, and ethylene biosynthesis and signaling components. May act as a transcriptional repressor of auxin-responsive genes. Regulates vegetative growth, lateral root formation and flower organ senescence, possibly partially by regulating gene expression of auxin and ethylene response factor (ERF) genes. Plays a negative role in axillary shoot meristem formation. In Solanum lycopersicum (Tomato), this protein is Auxin response factor 2A.